We begin with the raw amino-acid sequence, 305 residues long: 17-beta-hydroxysteroid dehydrogenase type 3 (305 aa).

Position 44–73 (44–73 (GQWAVITGAGDGIGKAYSFELARHGLNVVL)) interacts with NADP(+). S181 provides a ligand contact to substrate. Y194 (proton acceptor) is an active-site residue.

The protein belongs to the short-chain dehydrogenases/reductases (SDR) family. 17-beta-HSD 3 subfamily. As to expression, expressed in the testes.

The protein localises to the endoplasmic reticulum. It catalyses the reaction a 17beta-hydroxy steroid + NADP(+) = a 17-oxo steroid + NADPH + H(+). It carries out the reaction testosterone + NADP(+) = androst-4-ene-3,17-dione + NADPH + H(+). The enzyme catalyses 17beta-estradiol + NADP(+) = estrone + NADPH + H(+). The catalysed reaction is 3beta-hydroxyandrost-5-en-17-one + NADPH + H(+) = androst-5-en-3beta,17beta-diol + NADP(+). It catalyses the reaction 17beta-hydroxy-5alpha-androstan-3-one + NADP(+) = 5alpha-androstan-3,17-dione + NADPH + H(+). It carries out the reaction androsterone + NADPH + H(+) = 5alpha-androstane-3alpha,17beta-diol + NADP(+). The enzyme catalyses 3beta-hydroxy-5alpha-androstan-17-one + NADPH + H(+) = 5alpha-androstane-3beta,17beta-diol + NADP(+). The catalysed reaction is androst-4-ene-3,11,17-trione + NADPH + H(+) = 17beta-hydroxyandrost-4-ene-3,11-dione + NADP(+). It catalyses the reaction 11beta-hydroxyandrost-4-ene-3,17-dione + NADPH + H(+) = 11beta,17beta-dihydroxyandrost-4-ene-3-one + NADP(+). Its pathway is hormone biosynthesis; testosterone biosynthesis. The protein operates within steroid metabolism. Functionally, catalyzes the conversion of 17-oxosteroids to 17beta-hydroxysteroids. Favors the reduction of androstenedione to testosterone. Testosterone is the key androgen driving male development and function. Uses NADPH while the two other EDH17B enzymes use NADH. Androgens such as epiandrosterone, dehydroepiandrosterone, androsterone and androstanedione are accepted as substrates and reduced at C-17. Can reduce 11-ketoandrostenedione as well as 11beta-hydroxyandrostenedione at C-17 to the respective testosterone forms. Plays a role in the rate-limiting-step for the maximum level of testosterone production by the testis but does not affect basal testosterone production. The chain is 17-beta-hydroxysteroid dehydrogenase type 3 from Mus musculus (Mouse).